The primary structure comprises 705 residues: Putative membrane protein SCO6666 (705 aa).

The next 13 membrane-spanning stretches (helical) occupy residues valine 16–glycine 36, leucine 144–glycine 164, asparagine 177–leucine 197, glycine 201–phenylalanine 221, isoleucine 232–valine 252, leucine 280–phenylalanine 300, leucine 306–leucine 326, valine 360–methionine 380, alanine 504–leucine 524, threonine 528–glutamine 548, leucine 561–methionine 581, valine 615–phenylalanine 635, and serine 636–valine 656.

It belongs to the resistance-nodulation-cell division (RND) (TC 2.A.6) family. MmpL subfamily.

The protein localises to the cell membrane. This Streptomyces coelicolor (strain ATCC BAA-471 / A3(2) / M145) protein is Putative membrane protein SCO6666.